Here is a 70-residue protein sequence, read N- to C-terminus: Conotoxin ArMKLT2-0112 (70 aa).

An N-terminal signal peptide occupies residues 1-22 (MKLTCVLIIAVLFLTACQLTTG). Positions 23–40 (EQKDHALRSTDKNSKLTR) are excised as a propeptide. Gln41 carries the post-translational modification Pyrrolidone carboxylic acid. Cystine bridges form between Cys42-Cys56, Cys49-Cys60, and Cys55-Cys67.

The protein belongs to the conotoxin O1 superfamily. Expressed by the venom duct.

The protein resides in the secreted. The polypeptide is Conotoxin ArMKLT2-0112 (Conus arenatus (Sand-dusted cone)).